Reading from the N-terminus, the 452-residue chain is Transcription factor PERIANTHIA (452 aa).

One can recognise a bZIP domain in the interval Asp-164 to Leu-227. Residues Arg-166 to Lys-186 are basic motif. The tract at residues Leu-192 to Leu-206 is leucine-zipper. The DOG1 domain occupies Val-233 to Arg-449.

It belongs to the bZIP family. As to quaternary structure, interacts with GRXC7/ROXY1. Interacts with BOP1 and BOP2.

Its subcellular location is the nucleus. Transcriptional activator involved in the determination of floral organ number. Acts to determine floral organ patterning by establishing floral organ primordia in specific numbers and positions. Plays a role in regulating stem cell fate by directly controlling AG expression. Binds to the 5'-AAGAAT-3' cis-acting element found in AG promoter. Might represent a target for a post-translational modification by GRXC7/ROXY1. The protein is Transcription factor PERIANTHIA (PAN) of Arabidopsis thaliana (Mouse-ear cress).